The chain runs to 100 residues: Large ribosomal subunit protein uL23 (100 aa).

It belongs to the universal ribosomal protein uL23 family. Part of the 50S ribosomal subunit. Contacts protein L29, and trigger factor when it is bound to the ribosome.

Its function is as follows. One of the early assembly proteins it binds 23S rRNA. One of the proteins that surrounds the polypeptide exit tunnel on the outside of the ribosome. Forms the main docking site for trigger factor binding to the ribosome. The polypeptide is Large ribosomal subunit protein uL23 (Buchnera aphidicola subsp. Schizaphis graminum (strain Sg)).